Here is a 206-residue protein sequence, read N- to C-terminus: Large ribosomal subunit protein uL4 (206 aa).

Positions 63-96 are disordered; that stretch reads MYKQKGTGRARHHSARAPQFRGGGKAHGPVVRSH. Residues 64–77 show a composition bias toward basic residues; that stretch reads YKQKGTGRARHHSA.

Belongs to the universal ribosomal protein uL4 family. Part of the 50S ribosomal subunit.

In terms of biological role, one of the primary rRNA binding proteins, this protein initially binds near the 5'-end of the 23S rRNA. It is important during the early stages of 50S assembly. It makes multiple contacts with different domains of the 23S rRNA in the assembled 50S subunit and ribosome. Functionally, forms part of the polypeptide exit tunnel. The polypeptide is Large ribosomal subunit protein uL4 (Allorhizobium ampelinum (strain ATCC BAA-846 / DSM 112012 / S4) (Agrobacterium vitis (strain S4))).